Consider the following 256-residue polypeptide: Thiazole synthase (256 aa).

Lys95 serves as the catalytic Schiff-base intermediate with DXP. Residues Gly156, 182–183 (AG), and 204–205 (NT) contribute to the 1-deoxy-D-xylulose 5-phosphate site.

Belongs to the ThiG family. Homotetramer. Forms heterodimers with either ThiH or ThiS.

It is found in the cytoplasm. It catalyses the reaction [ThiS sulfur-carrier protein]-C-terminal-Gly-aminoethanethioate + 2-iminoacetate + 1-deoxy-D-xylulose 5-phosphate = [ThiS sulfur-carrier protein]-C-terminal Gly-Gly + 2-[(2R,5Z)-2-carboxy-4-methylthiazol-5(2H)-ylidene]ethyl phosphate + 2 H2O + H(+). The protein operates within cofactor biosynthesis; thiamine diphosphate biosynthesis. Functionally, catalyzes the rearrangement of 1-deoxy-D-xylulose 5-phosphate (DXP) to produce the thiazole phosphate moiety of thiamine. Sulfur is provided by the thiocarboxylate moiety of the carrier protein ThiS. In vitro, sulfur can be provided by H(2)S. The polypeptide is Thiazole synthase (Salmonella paratyphi A (strain ATCC 9150 / SARB42)).